The sequence spans 295 residues: Bifunctional protein FolD (295 aa).

Residues G169–S171, S194, and I235 each bind NADP(+).

It belongs to the tetrahydrofolate dehydrogenase/cyclohydrolase family. In terms of assembly, homodimer.

The enzyme catalyses (6R)-5,10-methylene-5,6,7,8-tetrahydrofolate + NADP(+) = (6R)-5,10-methenyltetrahydrofolate + NADPH. The catalysed reaction is (6R)-5,10-methenyltetrahydrofolate + H2O = (6R)-10-formyltetrahydrofolate + H(+). It participates in one-carbon metabolism; tetrahydrofolate interconversion. Functionally, catalyzes the oxidation of 5,10-methylenetetrahydrofolate to 5,10-methenyltetrahydrofolate and then the hydrolysis of 5,10-methenyltetrahydrofolate to 10-formyltetrahydrofolate. This Acaryochloris marina (strain MBIC 11017) protein is Bifunctional protein FolD.